The primary structure comprises 92 residues: Transcription factor PRE4 (92 aa).

The bHLH domain occupies 5–60; the sequence is KSRSRQTGASMITDEQINDLVLQLHRLLPELANNRRSGKVSASRVLQETCSYIRNL.

It belongs to the bHLH protein family. In terms of assembly, interacts with HFR1 and IBH1. As to expression, expressed in roots, leaves, stems and flowers.

It is found in the nucleus. Functionally, atypical and probable non DNA-binding bHLH transcription factor that integrates multiple signaling pathways to regulate cell elongation and plant development. Regulates light responses by binding and inhibiting the activity of the bHLH transcription factor HFR1, a critical regulator of light signaling and shade avoidance. May have a regulatory role in various aspects of gibberellin-dependent growth and development. The sequence is that of Transcription factor PRE4 (PRE4) from Arabidopsis thaliana (Mouse-ear cress).